The chain runs to 589 residues: Inactive poly [ADP-ribose] polymerase RCD1 (589 aa).

Positions 64 to 153 (KLSAYENRSG…ETGAKTPLAW (90 aa)) constitute a WWE domain. The region spanning 248–469 (EAAVSKWDET…LIAKRDNSGV (222 aa)) is the PARP catalytic domain. Disordered regions lie at residues 464-504 (RDNS…TRPK) and 569-589 (QPKS…AGGL). Polar residues predominate over residues 481–503 (LESNQGARGSGSANSVGSSTTRP). Positions 501–572 (TRPKSPWMPF…ITTLQNQPKS (72 aa)) constitute an RST domain. Residues 571–589 (KSKEIPGSIRDHEEGAGGL) are compositionally biased toward basic and acidic residues.

Interacts with the transcription factors NAC013/NTL1 and NAC046. Interacts with dehydration-responsive DREB2 proteins and a number of transcription factors belonging to several protein families. Interacts with turnip crinkle virus (TCV) movement protein P8. In terms of tissue distribution, expressed in young developing tissues, such as young leaves and flowers and root tips. In mature plants, expressed in vasculature of leaves and roots, and guard cells.

The protein resides in the nucleus matrix. Inactive ADP-ribosyltransferase that functions with SRO1 to regulate oxidative stress, hormonal and developmental responses. Required for embryogenesis, vegetative and reproductive development, and abiotic stress responses. May regulate several stress-responsive genes. Seems to play a larger developmental role than SRO1. Does not bind NAD in vitro. This is Inactive poly [ADP-ribose] polymerase RCD1 (RCD1) from Arabidopsis thaliana (Mouse-ear cress).